A 54-amino-acid polypeptide reads, in one-letter code: Anti-adapter protein SpxO (54 aa).

As to quaternary structure, interacts with SpxH.

Inhibitor of Spx proteolytic control. Acts by interacting with SpxH/YjbH, which disrupts interaction between SpxH and Spx, and inhibits SpxH-enhanced proteolysis of Spx by ClpXP. Required for the stabilization of Spx and activation of Spx-regulated genes in response to cell wall stress. This chain is Anti-adapter protein SpxO, found in Bacillus subtilis (strain 168).